Here is a 295-residue protein sequence, read N- to C-terminus: Fructose-bisphosphate aldolase class 1 (295 aa).

Residue Glu176 is the Proton acceptor of the active site. The active-site Schiff-base intermediate with dihydroxyacetone-P is Lys213.

Belongs to the class I fructose-bisphosphate aldolase family.

It catalyses the reaction beta-D-fructose 1,6-bisphosphate = D-glyceraldehyde 3-phosphate + dihydroxyacetone phosphate. It functions in the pathway carbohydrate degradation; glycolysis; D-glyceraldehyde 3-phosphate and glycerone phosphate from D-glucose: step 4/4. This chain is Fructose-bisphosphate aldolase class 1, found in Fusobacterium nucleatum subsp. nucleatum (strain ATCC 25586 / DSM 15643 / BCRC 10681 / CIP 101130 / JCM 8532 / KCTC 2640 / LMG 13131 / VPI 4355).